The chain runs to 202 residues: Lipoprotein signal peptidase (202 aa).

Positions 1-29 (MPDEPTGSADPLTSTEEAGGAGEPNAPAP) are disordered. 3 helical membrane passes run 35-55 (MLLS…VVAV), 88-108 (GYTW…FWMG), and 112-132 (VSPW…GNLV). Catalysis depends on residues aspartate 148 and aspartate 162. Residues 160 to 180 (VADPSVVGGAILLVILSIFGF) traverse the membrane as a helical segment.

Belongs to the peptidase A8 family.

It is found in the cell membrane. It catalyses the reaction Release of signal peptides from bacterial membrane prolipoproteins. Hydrolyzes -Xaa-Yaa-Zaa-|-(S,diacylglyceryl)Cys-, in which Xaa is hydrophobic (preferably Leu), and Yaa (Ala or Ser) and Zaa (Gly or Ala) have small, neutral side chains.. It participates in protein modification; lipoprotein biosynthesis (signal peptide cleavage). Its function is as follows. This protein specifically catalyzes the removal of signal peptides from prolipoproteins. This Mycobacterium bovis (strain ATCC BAA-935 / AF2122/97) protein is Lipoprotein signal peptidase.